A 509-amino-acid polypeptide reads, in one-letter code: MAAIGVHLGCTSACVAVYKDGRAGVVANDAGDRVTPAVVAYSENEEIVGLAAKQSRIRNISNTVMKVKQILGRSSNDPQAQKYIVESKCLVIEKNGKLRYEIDTGEETKLVNPEDVARLIFSKMKETAHSVLGSDANDVVITVPFDFGEKQKNALGEAARAAGFNVLRLIHEPSAALLAYGIGQDSPTGKSNILVFKLGGTSLSLSIMEVNSGIYRVLSTNTDDNIGGAHFTETLAQYLASEFQRSFKYDVRGNARAMMKLMNSAEVAKHSLSTLGSANCFLDSLYEGQDFDCNVSRARFELLCSPLFNKCIEAIRGLLDQSGFTADDINKVVLCGGSSRIPKLQQLIKDIFPAVELLNSIPPDEVIPIGAAIEAGILIGKENLLVEDSLMIECSARDILVKGVDESGASRFTVLFPSGTPLPARRQHTLQAPGSISSVCLELYESDGKNSAKEETKFAQVVLQDLDKKENGLRDILAVLTMKRDGSLHVTCTDQETGKCEAISIEVAS.

Belongs to the heat shock protein 70 family. Component of ribosome-associated complex (RAC), a heterodimer composed of Hsp70/DnaK-type chaperone HSPA14 and Hsp40/DnaJ-type chaperone DNAJC2.

The protein localises to the cytoplasm. Its subcellular location is the cytosol. Its function is as follows. Component of the ribosome-associated complex (RAC), a complex involved in folding or maintaining nascent polypeptides in a folding-competent state. In the RAC complex, binds to the nascent polypeptide chain, while DNAJC2 stimulates its ATPase activity. The sequence is that of Heat shock 70 kDa protein 14 (HSPA14) from Pongo abelii (Sumatran orangutan).